A 944-amino-acid chain; its full sequence is Probable UDP-N-acetylglucosamine--peptide N-acetylglucosaminyltransferase SPINDLY (944 aa).

11 TPR repeats span residues 34 to 67, 68 to 101, 102 to 135, 143 to 176, 177 to 210, 211 to 244, 252 to 285, 286 to 319, 320 to 353, 355 to 387, and 388 to 421; these read GTDA…DGAN, VEAL…DPKN, ACAL…DPSY, AIVL…DSHY, APAY…RPLY, AEAY…SPNF, AIAL…NWHY, ADAM…NPRC, AEAC…KPNF, QSLN…NPTY, and AEAY…DPDS. The segment at 422–944 is catalytic region; it reads RNAGQNRLLA…RCEANGHSSR (523 aa). Residues 873–944 are disordered; sequence NATAEEDNQS…RCEANGHSSR (72 aa). Residues 897–911 are compositionally biased toward polar residues; it reads PQPQIMVNGVTSPEG.

This sequence belongs to the glycosyltransferase 41 family. O-GlcNAc transferase subfamily. In terms of tissue distribution, expressed in all parts of plants, including immature leaf blade, leaf sheath, mature leaf blade, roots, germinating embryos and aleurone layers.

Its subcellular location is the nucleus. It catalyses the reaction L-seryl-[protein] + UDP-N-acetyl-alpha-D-glucosamine = 3-O-(N-acetyl-beta-D-glucosaminyl)-L-seryl-[protein] + UDP + H(+). The enzyme catalyses L-threonyl-[protein] + UDP-N-acetyl-alpha-D-glucosamine = 3-O-(N-acetyl-beta-D-glucosaminyl)-L-threonyl-[protein] + UDP + H(+). The protein operates within protein modification; protein glycosylation. Probable O-linked N-acetylglucosamine transferase (OGT) involved in various processes such as gibberellin (GA) signaling pathway. OGTs catalyze the addition of nucleotide-activated sugars directly onto the polypeptide through O-glycosidic linkage with the hydroxyl of serine or threonine. Probably acts by adding O-linked sugars to yet unknown proteins. This Hordeum vulgare (Barley) protein is Probable UDP-N-acetylglucosamine--peptide N-acetylglucosaminyltransferase SPINDLY (SPY).